The chain runs to 391 residues: 2-deoxy-scyllo-inosose synthase (391 aa).

Residues D42, 73 to 76 (EVHK), 105 to 109 (GVTGN), 129 to 130 (TT), 140 to 142 (SLK), and 151 to 152 (KN) each bind NAD(+). The active site involves K142. A Co(2+)-binding site is contributed by E184. Residue E244 is part of the active site. Positions 247 and 263 each coordinate Co(2+).

It belongs to the sugar phosphate cyclases superfamily. DOI synthase family. NAD(+) serves as cofactor. It depends on Co(2+) as a cofactor.

The enzyme catalyses D-glucose 6-phosphate = 2-deoxy-L-scyllo-inosose + phosphate. Its pathway is metabolic intermediate biosynthesis; 2-deoxystreptamine biosynthesis; 2-deoxystreptamine from D-glucose 6-phosphate: step 1/4. The protein operates within antibiotic biosynthesis; ribostamycin biosynthesis. Catalyzes the intramolecular carbocycle formation from D-glucose-6-phosphate to 2-deoxy-scyllo-inosose (DOI). This chain is 2-deoxy-scyllo-inosose synthase (rbmA), found in Streptomyces ribosidificus.